A 278-amino-acid polypeptide reads, in one-letter code: Nucleotide-binding protein LHK_02029 (278 aa).

8 to 15 is an ATP binding site; the sequence is GLAGSGKS. Position 57–60 (57–60) interacts with GTP; that stretch reads DTRD.

Belongs to the RapZ-like family.

Displays ATPase and GTPase activities. The protein is Nucleotide-binding protein LHK_02029 of Laribacter hongkongensis (strain HLHK9).